Reading from the N-terminus, the 336-residue chain is Aspartate--ammonia ligase (336 aa).

The protein belongs to the class-II aminoacyl-tRNA synthetase family. AsnA subfamily.

The protein resides in the cytoplasm. The catalysed reaction is L-aspartate + NH4(+) + ATP = L-asparagine + AMP + diphosphate + H(+). The protein operates within amino-acid biosynthesis; L-asparagine biosynthesis; L-asparagine from L-aspartate (ammonia route): step 1/1. This is Aspartate--ammonia ligase from Lactobacillus acidophilus (strain ATCC 700396 / NCK56 / N2 / NCFM).